A 398-amino-acid polypeptide reads, in one-letter code: MNIHEYQAKALLHEFGVPISKGVPVLRPEDADAAAKTLGGPVWVVKSQIHAGGRGKGKFKEASAGDKGGVRLAKSIDEVNTFARQMLGATLVTVQTGPDGKQVNRLYIEDGSDIDKEFYLSLLVDRETSKVAFVVSTEGGVNIEDVAHETPEKIVTFSVDPATGVMGHHGRAVAKALKLSGDLAKQAEKLTTQLYNAFVAKDMAMLEINPLVVTKQGQLRVLDAKVSFDSNALFKHPEVVALRDETEEDAKEIEASKYDLNYVALDGTIGCMVNGAGLAMATMDIIKLYGMEPANFLDVGGGASKEKVAAAFKIITADPNVKGILVNIFGGIMKCDVIAEGVVAAVKEVGLKVPLVVRLEGTNVDLGKKIISESGLNVLPADNLDDAAQKIVKAVKGG.

Residues 9-254 (KALLHEFGVP…ETEEDAKEIE (246 aa)) enclose the ATP-grasp domain. ATP-binding positions include Lys46, 53 to 55 (GRG), Glu109, Ser112, and Glu117. 2 residues coordinate Mg(2+): Asn209 and Asp223. Substrate-binding positions include Asn274 and 331–333 (GIM).

Belongs to the succinate/malate CoA ligase beta subunit family. In terms of assembly, heterotetramer of two alpha and two beta subunits. Mg(2+) is required as a cofactor.

It catalyses the reaction succinate + ATP + CoA = succinyl-CoA + ADP + phosphate. The enzyme catalyses GTP + succinate + CoA = succinyl-CoA + GDP + phosphate. Its pathway is carbohydrate metabolism; tricarboxylic acid cycle; succinate from succinyl-CoA (ligase route): step 1/1. Functionally, succinyl-CoA synthetase functions in the citric acid cycle (TCA), coupling the hydrolysis of succinyl-CoA to the synthesis of either ATP or GTP and thus represents the only step of substrate-level phosphorylation in the TCA. The beta subunit provides nucleotide specificity of the enzyme and binds the substrate succinate, while the binding sites for coenzyme A and phosphate are found in the alpha subunit. The protein is Succinate--CoA ligase [ADP-forming] subunit beta of Bradyrhizobium sp. (strain ORS 278).